The following is a 353-amino-acid chain: Photosystem II protein D1 (353 aa).

At threonine 2 the chain carries N-acetylthreonine. Position 2 is a phosphothreonine (threonine 2). 3 helical membrane passes run 29–46 (YIGW…TATS), 118–133 (HFLL…EWEL), and 142–156 (WIAV…AATA). Position 118 (histidine 118) interacts with chlorophyll a. A pheophytin a-binding site is contributed by tyrosine 126. [CaMn4O5] cluster-binding residues include aspartate 170 and glutamate 189. Residues 197–218 (FHMLGVAGVFGGSLFSAMHGSL) form a helical membrane-spanning segment. Histidine 198 provides a ligand contact to chlorophyll a. A quinone contacts are provided by residues histidine 215 and 264 to 265 (SF). Histidine 215 provides a ligand contact to Fe cation. Histidine 272 is a binding site for Fe cation. The chain crosses the membrane as a helical span at residues 274-288 (FLAAWPVVGIWFTAL). 4 residues coordinate [CaMn4O5] cluster: histidine 332, glutamate 333, aspartate 342, and alanine 344. A propeptide spanning residues 345–353 (AVEAPSING) is cleaved from the precursor.

This sequence belongs to the reaction center PufL/M/PsbA/D family. In terms of assembly, PSII is composed of 1 copy each of membrane proteins PsbA, PsbB, PsbC, PsbD, PsbE, PsbF, PsbH, PsbI, PsbJ, PsbK, PsbL, PsbM, PsbT, PsbX, PsbY, PsbZ, Psb30/Ycf12, at least 3 peripheral proteins of the oxygen-evolving complex and a large number of cofactors. It forms dimeric complexes. It depends on The D1/D2 heterodimer binds P680, chlorophylls that are the primary electron donor of PSII, and subsequent electron acceptors. It shares a non-heme iron and each subunit binds pheophytin, quinone, additional chlorophylls, carotenoids and lipids. D1 provides most of the ligands for the Mn4-Ca-O5 cluster of the oxygen-evolving complex (OEC). There is also a Cl(-1) ion associated with D1 and D2, which is required for oxygen evolution. The PSII complex binds additional chlorophylls, carotenoids and specific lipids. as a cofactor. Tyr-161 forms a radical intermediate that is referred to as redox-active TyrZ, YZ or Y-Z. Post-translationally, C-terminally processed by CTPA; processing is essential to allow assembly of the oxygen-evolving complex and thus photosynthetic growth.

Its subcellular location is the plastid. It is found in the chloroplast thylakoid membrane. It carries out the reaction 2 a plastoquinone + 4 hnu + 2 H2O = 2 a plastoquinol + O2. Its function is as follows. Photosystem II (PSII) is a light-driven water:plastoquinone oxidoreductase that uses light energy to abstract electrons from H(2)O, generating O(2) and a proton gradient subsequently used for ATP formation. It consists of a core antenna complex that captures photons, and an electron transfer chain that converts photonic excitation into a charge separation. The D1/D2 (PsbA/PsbD) reaction center heterodimer binds P680, the primary electron donor of PSII as well as several subsequent electron acceptors. The sequence is that of Photosystem II protein D1 from Chloranthus spicatus (Chulantree).